Consider the following 452-residue polypeptide: tRNA modification GTPase MnmE (452 aa).

The (6S)-5-formyl-5,6,7,8-tetrahydrofolate site is built by Arg-21, Glu-78, and Lys-118. The TrmE-type G domain maps to 214-375; the sequence is GMKVVIAGRP…LREHLKQSMG (162 aa). Asn-224 contributes to the K(+) binding site. GTP contacts are provided by residues 224-229, 243-249, and 268-271; these read NAGKSS, TDIAGTT, and DTAG. Residue Ser-228 participates in Mg(2+) binding. K(+) is bound by residues Thr-243, Ile-245, and Thr-248. Thr-249 contacts Mg(2+). Residue Lys-452 coordinates (6S)-5-formyl-5,6,7,8-tetrahydrofolate.

The protein belongs to the TRAFAC class TrmE-Era-EngA-EngB-Septin-like GTPase superfamily. TrmE GTPase family. In terms of assembly, homodimer. Heterotetramer of two MnmE and two MnmG subunits. K(+) serves as cofactor.

The protein resides in the cytoplasm. Its function is as follows. Exhibits a very high intrinsic GTPase hydrolysis rate. Involved in the addition of a carboxymethylaminomethyl (cmnm) group at the wobble position (U34) of certain tRNAs, forming tRNA-cmnm(5)s(2)U34. In Actinobacillus succinogenes (strain ATCC 55618 / DSM 22257 / CCUG 43843 / 130Z), this protein is tRNA modification GTPase MnmE.